Consider the following 456-residue polypeptide: MDADLNKLWEKTLNIVKSEMSEVSFNTWIKSCEPISISDTSIKISVPNSFTKDILDKRYKSLVANSIEAVCSKLYEIKFIIESDLNNEDELNNSDNSDKNRDKNSRRNIVVNDEMSSTLNPKYTFNSFVIGNSNRFAHAASLAVAEAPAKAYNPLFIYGGVGLGKTHLMHAIGHYILQNNTKAKVVYVSSEKFTNELINAIKDDKNEEFRKKYRNVDVLLIDDIQFIAGKERTQEEFFHTFNELHDANKQIILSSDRPPKEIPTLEDRLRSRFEWGLIADIQVPDFETRMAILKKKADVENLKVANEVMGYIATKIKSNIRELEGALIRIIAYSSLTNREVTVDLASEALKDIISKKQGKHVTIPSIQEIVANYFNLKIDDLKSQRRTRNVAYPRQIAMYLSRKLTDMSLPKIGEEFGGRDHTTVIHAYEKISENLKSDESLQHTVSDITKKVSQN.

Residues 1–85 (MDADLNKLWE…EIKFIIESDL (85 aa)) form a domain I, interacts with DnaA modulators region. The tract at residues 85–117 (LNNEDELNNSDNSDKNRDKNSRRNIVVNDEMSS) is domain II. The segment at 118–334 (TLNPKYTFNS…GALIRIIAYS (217 aa)) is domain III, AAA+ region. Residues glycine 162, glycine 164, lysine 165, and threonine 166 each contribute to the ATP site. Residues 335 to 456 (SLTNREVTVD…SDITKKVSQN (122 aa)) form a domain IV, binds dsDNA region.

The protein belongs to the DnaA family. As to quaternary structure, oligomerizes as a right-handed, spiral filament on DNA at oriC.

The protein resides in the cytoplasm. Its function is as follows. Plays an essential role in the initiation and regulation of chromosomal replication. ATP-DnaA binds to the origin of replication (oriC) to initiate formation of the DNA replication initiation complex once per cell cycle. Binds the DnaA box (a 9 base pair repeat at the origin) and separates the double-stranded (ds)DNA. Forms a right-handed helical filament on oriC DNA; dsDNA binds to the exterior of the filament while single-stranded (ss)DNA is stabiized in the filament's interior. The ATP-DnaA-oriC complex binds and stabilizes one strand of the AT-rich DNA unwinding element (DUE), permitting loading of DNA polymerase. After initiation quickly degrades to an ADP-DnaA complex that is not apt for DNA replication. Binds acidic phospholipids. In Clostridium botulinum (strain Eklund 17B / Type B), this protein is Chromosomal replication initiator protein DnaA.